A 733-amino-acid polypeptide reads, in one-letter code: Ferric aerobactin receptor (733 aa).

Positions methionine 1–alanine 25 are cleaved as a signal peptide. Residues glutamate 31 to asparagine 38 carry the TonB box motif. The TBDR plug domain occupies threonine 43–lysine 153. Positions glutamate 158–phenylalanine 733 constitute a TBDR beta-barrel domain. The TonB C-terminal box signature appears at tyrosine 716–phenylalanine 733.

The protein belongs to the TonB-dependent receptor family.

The protein localises to the cell outer membrane. Its function is as follows. Receptor for aerobactin. The chain is Ferric aerobactin receptor (iutA) from Klebsiella pneumoniae.